A 295-amino-acid polypeptide reads, in one-letter code: Malonyl-[acyl-carrier protein] O-methyltransferase (295 aa).

It belongs to the methyltransferase superfamily.

It carries out the reaction malonyl-[ACP] + S-adenosyl-L-methionine = malonyl-[ACP] methyl ester + S-adenosyl-L-homocysteine. The protein operates within cofactor biosynthesis; biotin biosynthesis. Converts the free carboxyl group of a malonyl-thioester to its methyl ester by transfer of a methyl group from S-adenosyl-L-methionine (SAM). It allows to synthesize pimeloyl-ACP via the fatty acid synthetic pathway. This is Malonyl-[acyl-carrier protein] O-methyltransferase from Xylella fastidiosa (strain M23).